A 510-amino-acid chain; its full sequence is E3 ubiquitin-protein ligase TRIM7 (510 aa).

The segment at C29–R81 adopts an RING-type zinc-finger fold. S106 carries the post-translational modification Phosphoserine; by RPS6KA5. The segment at A124–L165 adopts a B box-type zinc-finger fold. Residues C129, H132, C151, and H157 each coordinate Zn(2+). Residues L165–K275 adopt a coiled-coil conformation. Residues L323–P510 enclose the B30.2/SPRY domain.

Belongs to the TRIM/RBCC family. Forms homodimers. Interacts with GNIP2. Interacts with GYG1. Interacts with RNF187 (via C-terminus). Post-translationally, phosphorylated at Ser-106 by RPS6KA5/MSK1, which stimulates the ubiquitin ligase activity. In terms of processing, auto-ubiquitinates via 'Lys-63'-linked polyubiquitination. In terms of tissue distribution, highly expressed in antigen-presenting cells.

It is found in the nucleus. Its subcellular location is the cytoplasm. It localises to the golgi apparatus. The enzyme catalyses S-ubiquitinyl-[E2 ubiquitin-conjugating enzyme]-L-cysteine + [acceptor protein]-L-lysine = [E2 ubiquitin-conjugating enzyme]-L-cysteine + N(6)-ubiquitinyl-[acceptor protein]-L-lysine.. It participates in protein modification; protein ubiquitination. Functionally, E3 ubiquitin-protein ligase that have both tumor-promoting and tumor-suppressing activities and functions in several biological processes including innate immunity, regulation of ferroptosis as well as cell proliferation and migration. Acts as an antiviral effector against multiple viruses by targeting specific viral proteins for ubiquitination and degradation including norovirus NTPase protein. Mechanistically, recognizes the C-terminal glutamine-containing motif generated by viral proteases that process the polyproteins and trigger their ubiquitination and subsequent degradation. Mediates 'Lys-63'-linked polyubiquitination and stabilization of the JUN coactivator RNF187 in response to growth factor signaling via the MEK/ERK pathway, thereby regulating JUN transactivation and cellular proliferation. Promotes the TLR4-mediated signaling activation through its E3 ligase domain leading to production of pro-inflammatory cytokines and type I interferon. Also plays a negative role in the regulation of exogenous cytosolic DNA virus-triggered immune response. Mechanistically, enhances the 'Lys-48'-linked ubiquitination of STING1 leading to its proteasome-dependent degradation. Mediates the ubiquitination of the SIN3-HDAC chromatin remodeling complex component BRMS1. Modulates NCOA4-mediated ferritinophagy and ferroptosis in glioblastoma cells by ubiquitinating NCOA4, leading to its degradation. The polypeptide is E3 ubiquitin-protein ligase TRIM7 (Trim7) (Mus musculus (Mouse)).